A 72-amino-acid chain; its full sequence is Translation initiation factor IF-1 (72 aa).

In terms of domain architecture, S1-like spans 1–72 (MSKDDVIQMQ…SRARIVFRAK (72 aa)).

The protein belongs to the IF-1 family. As to quaternary structure, component of the 30S ribosomal translation pre-initiation complex which assembles on the 30S ribosome in the order IF-2 and IF-3, IF-1 and N-formylmethionyl-tRNA(fMet); mRNA recruitment can occur at any time during PIC assembly.

It localises to the cytoplasm. In terms of biological role, one of the essential components for the initiation of protein synthesis. Stabilizes the binding of IF-2 and IF-3 on the 30S subunit to which N-formylmethionyl-tRNA(fMet) subsequently binds. Helps modulate mRNA selection, yielding the 30S pre-initiation complex (PIC). Upon addition of the 50S ribosomal subunit IF-1, IF-2 and IF-3 are released leaving the mature 70S translation initiation complex. In Methylibium petroleiphilum (strain ATCC BAA-1232 / LMG 22953 / PM1), this protein is Translation initiation factor IF-1.